The primary structure comprises 80 residues: Small ribosomal subunit protein bS18 (80 aa).

The protein belongs to the bacterial ribosomal protein bS18 family. In terms of assembly, part of the 30S ribosomal subunit. Forms a tight heterodimer with protein bS6.

Binds as a heterodimer with protein bS6 to the central domain of the 16S rRNA, where it helps stabilize the platform of the 30S subunit. The protein is Small ribosomal subunit protein bS18 of Clostridium perfringens (strain ATCC 13124 / DSM 756 / JCM 1290 / NCIMB 6125 / NCTC 8237 / Type A).